Reading from the N-terminus, the 341-residue chain is MKEKILLGGYTKRVSKGVYSVLLDTKAAELSSLNEVAAVQNPTYITLDEKGHLYTCAADSNGGGIAAFDFDGETATHLGNVTTTGAPLCYVAVDEARQLVYGANYHLGEVRVYKIQANGSLRLTDTVKHTGSGPRPEQASSHVHYSDLTPDGRLVTCDLGTDEVTVYDVIGEGKLNIATIYRAEKGMGARHITFHPNGKIAYLVGELNSTIEVLSYNEEKGRFARLQTISTLPEDYHGANGVAAIRISSDGKFLYTSNRGHDSLTTYKVSPLGTKLETIGWTNTEGHIPRDFNFNKTEDYIIVAHQESDNLSLFLRDKKTGTLTLEQKDFYAPEITCVLPL.

This sequence belongs to the cycloisomerase 2 family.

This is an uncharacterized protein from Lactococcus lactis subsp. lactis (strain IL1403) (Streptococcus lactis).